A 103-amino-acid polypeptide reads, in one-letter code: Pyrimidine/purine nucleoside phosphorylase (103 aa).

Belongs to the nucleoside phosphorylase PpnP family.

It catalyses the reaction a purine D-ribonucleoside + phosphate = a purine nucleobase + alpha-D-ribose 1-phosphate. The enzyme catalyses adenosine + phosphate = alpha-D-ribose 1-phosphate + adenine. The catalysed reaction is cytidine + phosphate = cytosine + alpha-D-ribose 1-phosphate. It carries out the reaction guanosine + phosphate = alpha-D-ribose 1-phosphate + guanine. It catalyses the reaction inosine + phosphate = alpha-D-ribose 1-phosphate + hypoxanthine. The enzyme catalyses thymidine + phosphate = 2-deoxy-alpha-D-ribose 1-phosphate + thymine. The catalysed reaction is uridine + phosphate = alpha-D-ribose 1-phosphate + uracil. It carries out the reaction xanthosine + phosphate = alpha-D-ribose 1-phosphate + xanthine. Its function is as follows. Catalyzes the phosphorolysis of diverse nucleosides, yielding D-ribose 1-phosphate and the respective free bases. Can use uridine, adenosine, guanosine, cytidine, thymidine, inosine and xanthosine as substrates. Also catalyzes the reverse reactions. The sequence is that of Pyrimidine/purine nucleoside phosphorylase from Shewanella oneidensis (strain ATCC 700550 / JCM 31522 / CIP 106686 / LMG 19005 / NCIMB 14063 / MR-1).